Here is a 602-residue protein sequence, read N- to C-terminus: MSKNKKLSLSGGDTTEKFIYKPKDLIWAKMKGFTPWPGMIVDPPLDLLSQQRRANTKCVFFFGSRNFAWIEENNIKPFEGPWKEELAKVSKPAAFRHAMTDIEKYIDDPAEVDEQVNKSCGAPNHATEADFDKIRDGLDSEEIVGEEATADGNNGVVAHVVGSPDEGDGLDVEINADSSASPVTSPAVTTKAAGKRTPKAKSVAATSVKSTKGSAKSAQKRRTSAQQSPSGPSNAKRGKRDVSGEALQDADEASSTPTGRRRVETDALLASIAAKRAPNAIALLDRPVVTRPEAQVIDMSSRSNTLADRDIVPSEQTFGFLGLGMMGSTIVKDLIYTGHKVVVWNRTIDKCQPFAEAGAEVKDTPMDVVEAADVIFCCVSDPKGAKDLVFGNCGVLQLKDLNNKAYVEMSTIDPDTSLDIGEGIKQCNGRYLEAQIHGSRQEAAEGMLIILAGGDRSVFEECHSCFKTIAKNTFFLGNIGNACKVNLILQTILGVSLVGLAEALALADRFSISLNDIIDIFDLTSMKSPMLLAKGKEMAKGDFNPQQPLSHMQRDLRLVLNMAENLDQSMPVTSITNEVFKHTKRLGYSEHDSSAVFVRSRF.

Ser8 and Ser10 each carry phosphoserine. Residues 22 to 81 (PKDLIWAKMKGFTPWPGMIVDPPLDLLSQQRRANTKCVFFFGSRNFAWIEENNIKPFEGP) form the PWWP domain. Residues 162–262 (GSPDEGDGLD…ASSTPTGRRR (101 aa)) form a disordered region. Composition is skewed to polar residues over residues 176 to 188 (ADSS…SPAV), 204 to 217 (AATS…SAKS), and 224 to 233 (SAQQSPSGPS). A phosphoserine mark is found at Ser224, Ser228, and Ser243. The tract at residues 309 to 602 (RDIVPSEQTF…SSAVFVRSRF (294 aa)) is dehydrogenase domain. NAD(+)-binding positions include 319–333 (GFLG…IVKD), Thr411, and Arg554.

The protein belongs to the HIBADH-related family. NP60 subfamily. Binds to mononucleosomes. Interacts with male-specific lethal (MSL) histone acetyltransferase complex at least composed of mof, msl-1, msl-2 and msl-3.

Its subcellular location is the chromosome. In terms of biological role, nucleosome-destabilizing factor that is recruited to genes during transcriptional activation and colocalizes with a subset of trimethylated 'Lys-36' histone H3 (H3K36me3)-enriched regions. Binds DNA (in vitro). Facilitates Pol II transcription through nucleosomes. Facilitates male-specific lethal (MSL) histone acetyltransferase complex targeting to active genes on the X chromosome. Stimulates the acetylation of 'Lys-56' of nucleosomal histone H3 (H3K56ac) by nej. May have oxidoreductase activity. In Drosophila melanogaster (Fruit fly), this protein is Cytokine-like nuclear factor N-PAC.